The chain runs to 264 residues: Thymidylate synthase (264 aa).

Arg21 provides a ligand contact to dUMP. Residue His51 coordinates (6R)-5,10-methylene-5,6,7,8-tetrahydrofolate. 126–127 (RR) is a binding site for dUMP. Catalysis depends on Cys146, which acts as the Nucleophile. Residues 166 to 169 (RSAD), Asn177, and 207 to 209 (HLY) each bind dUMP. Asp169 is a binding site for (6R)-5,10-methylene-5,6,7,8-tetrahydrofolate. Residue Ser263 coordinates (6R)-5,10-methylene-5,6,7,8-tetrahydrofolate.

Belongs to the thymidylate synthase family. Bacterial-type ThyA subfamily. In terms of assembly, homodimer.

The protein localises to the cytoplasm. The catalysed reaction is dUMP + (6R)-5,10-methylene-5,6,7,8-tetrahydrofolate = 7,8-dihydrofolate + dTMP. The protein operates within pyrimidine metabolism; dTTP biosynthesis. Its function is as follows. Catalyzes the reductive methylation of 2'-deoxyuridine-5'-monophosphate (dUMP) to 2'-deoxythymidine-5'-monophosphate (dTMP) while utilizing 5,10-methylenetetrahydrofolate (mTHF) as the methyl donor and reductant in the reaction, yielding dihydrofolate (DHF) as a by-product. This enzymatic reaction provides an intracellular de novo source of dTMP, an essential precursor for DNA biosynthesis. In Neisseria meningitidis serogroup C / serotype 2a (strain ATCC 700532 / DSM 15464 / FAM18), this protein is Thymidylate synthase.